The sequence spans 36 residues: Photosystem I reaction center subunit VIII (36 aa).

A helical membrane pass occupies residues 9 to 29 (ILVPLVGLVFPAIAMASLFLY).

It belongs to the PsaI family.

Its subcellular location is the plastid. The protein localises to the chloroplast thylakoid membrane. May help in the organization of the PsaL subunit. The sequence is that of Photosystem I reaction center subunit VIII from Oltmannsiellopsis viridis (Marine flagellate).